The chain runs to 352 residues: MIDKIVFEEDEEYDLTQDSFRYGRVTTGASYNLVTGKIPETVLEQVKAKDDENDDVEFEMDHLEDKEAVQKTKTFDELYESQMPKYFEYQSNFSEVNGIWTLLFDQNHYENMSTFELQAAICAALNSKHYMMICVGIDAFNAVTGVEMSAKDRVVFRMALTRAVAGEFQPPLVKVAPKQLTGVSPMKRDISEVTSSIDVLFIPVIGVTDEVENNRFLIVVRVKEISDKVYQISSGRIYNELEGRVVEMSDMNEAFHKLIVEQSISDIQTRRGSMFMLEPEPFLEDSPVIFTGSKEILRENHEIPNILKENSTERSLSQSLLNLLDIQNIGWIFFGTALSCCIYNNAIKPLVK.

The interval 87 to 235 is SLFN-like fold; that stretch reads FEYQSNFSEV…SDKVYQISSG (149 aa). The helical transmembrane segment at 326 to 343 threads the bilayer; it reads IQNIGWIFFGTALSCCIY.

Belongs to the Schlafen family. In terms of assembly, component of the PUCH (precursor of 21U RNA 5'-end cleavage holoenzyme) complex; consisting of tofu-1, tofu-2 and either slfl-3 or slfl-4.

It is found in the membrane. In terms of biological role, component of the trimeric PUCH (precursor of 21U RNA 5'-end cleavage holoenzyme) complex, that acts as an endoribonuclease processing the 5'-end of precursor Piwi-interacting RNAs (piRNAs). The PUCH complex consists of tofu-1, tofu-2 and either slfl-3 or slfl-4, where tofu-2 exhibits endoribonuclease activity. PUCH-mediated processing strictly requires a 7-methyl-G cap (m7 G-cap) and an uracil at position three (U3). PUCH also exhibits a strict bias for piRNA precursors with an A or G at position 1. Mature piRNA production is enhanced by the interaction of PUCH with the PETISCO complex, which is stabilizing piRNA precursors and allows their processing by PUCH. This chain is Schlafen-like protein 4, found in Caenorhabditis elegans.